A 311-amino-acid chain; its full sequence is Malate dehydrogenase (311 aa).

NAD(+) is bound by residues 7 to 13 and Asp34; that span reads GAAGGIG. Positions 81 and 87 each coordinate substrate. Residues Asn94 and 117-119 each bind NAD(+); that span reads ITN. Residues Asn119 and Arg153 each coordinate substrate. The active-site Proton acceptor is the His177. Met227 provides a ligand contact to NAD(+).

This sequence belongs to the LDH/MDH superfamily. MDH type 1 family. Homodimer.

The enzyme catalyses (S)-malate + NAD(+) = oxaloacetate + NADH + H(+). Catalyzes the reversible oxidation of malate to oxaloacetate. The polypeptide is Malate dehydrogenase (Haemophilus influenzae (strain 86-028NP)).